Here is a 506-residue protein sequence, read N- to C-terminus: Parthenolide synthase (506 aa).

The chain crosses the membrane as a helical span at residues 10–30; that stretch reads LFLPTLCTILISYIIIKYVLI. N-linked (GlcNAc...) asparagine glycans are attached at residues N32, N63, N121, N168, and N175. A helical transmembrane segment spans residues 301–321; it reads LLLNVLLGAIDTTFTTIVWAM. C448 lines the heme pocket.

Belongs to the cytochrome P450 family.

It localises to the membrane. It catalyses the reaction (+)-costunolide + reduced [NADPH--hemoprotein reductase] + O2 = parthenolide + oxidized [NADPH--hemoprotein reductase] + H2O + H(+). It participates in secondary metabolite biosynthesis; terpenoid biosynthesis. Involved in the biosynthesis of germacrene-derived sesquiterpene lactones. Component of the parthenolide biosynthetic pathway; parthenolide and conjugates are promising anti-cancer drugs highly active against colon cancer cells. Catalyzes the conversion of costunolide to parthenolide. The chain is Parthenolide synthase from Tanacetum parthenium (Feverfew).